Consider the following 90-residue polypeptide: U7-theraphotoxin-Hhn1a 4 (90 aa).

An N-terminal signal peptide occupies residues Met-1–Ser-19. Positions Phe-20–Glu-50 are excised as a propeptide. 3 disulfide bridges follow: Cys-51–Cys-65, Cys-58–Cys-70, and Cys-64–Cys-81.

The protein belongs to the neurotoxin 10 (Hwtx-1) family. 13 (Hntx-13) subfamily. Expressed by the venom gland.

It is found in the secreted. Functionally, ion channel inhibitor. This chain is U7-theraphotoxin-Hhn1a 4, found in Cyriopagopus hainanus (Chinese bird spider).